The sequence spans 260 residues: HTH-type transcriptional repressor NanR (260 aa).

The 69-residue stretch at 27–95 (KKLSEMVEEE…NGERARISRP (69 aa)) folds into the HTH gntR-type domain. A DNA-binding region (H-T-H motif) is located at residues 55 to 74 (ERELMAFFNVGRPSVREALA).

This sequence belongs to the NanR family.

Transcriptional repressor that controls expression of the genes required for the catabolism of sialic acids. This chain is HTH-type transcriptional repressor NanR, found in Edwardsiella tarda (strain FL6-60).